The sequence spans 570 residues: Urease subunit alpha (570 aa).

In terms of domain architecture, Urease spans G132–F570. Ni(2+) is bound by residues H137 and H139. Residues H139 and A170 each coordinate substrate. Ni(2+) is bound at residue K220. At K220 the chain carries N6-carboxylysine. Residues H222 and H249 each coordinate substrate. Residues H249 and H275 each coordinate Ni(2+). H323 acts as the Proton donor in catalysis. Residue D363 participates in Ni(2+) binding. A substrate-binding site is contributed by A366.

It belongs to the metallo-dependent hydrolases superfamily. Urease alpha subunit family. Heterotrimer of UreA (gamma), UreB (beta) and UreC (alpha) subunits. Three heterotrimers associate to form the active enzyme. Ni cation serves as cofactor. Post-translationally, carboxylation allows a single lysine to coordinate two nickel ions.

It localises to the cytoplasm. It catalyses the reaction urea + 2 H2O + H(+) = hydrogencarbonate + 2 NH4(+). Its pathway is nitrogen metabolism; urea degradation; CO(2) and NH(3) from urea (urease route): step 1/1. Inhibited by fluoride. The protein is Urease subunit alpha of Sporosarcina pasteurii (Bacillus pasteurii).